Here is a 311-residue protein sequence, read N- to C-terminus: Iron-binding protein YfeA (311 aa).

An N-terminal signal peptide occupies residues M1 to A31. Residues H76, H141, E207, and D282 each coordinate Fe(2+).

The protein belongs to the bacterial solute-binding protein 9 family. In terms of assembly, monomer.

It localises to the periplasm. In terms of biological role, part of the ATP-binding cassette (ABC) transport system YfeABC involved in iron import. Binds iron with high affinity and specificity and delivers it to the membrane permease for translocation into the cytoplasm. Also binds Mn(2+) and Zn(2+). The protein is Iron-binding protein YfeA (yfeA) of Yersinia pestis.